We begin with the raw amino-acid sequence, 106 residues long: MAQEFVNCKIQPGKVVVFIKPTCPYCRRAQEILSQLPIKQGLLEFVDITATNHTNEIQDYLQQLTGARTVPRVFIGKDCIGGCSDLVSLQQSGELLTRLKQIGALQ.

N-acetylalanine is present on A2. The Glutaredoxin domain occupies 3–106 (QEFVNCKIQP…TRLKQIGALQ (104 aa)). K9 bears the N6-succinyllysine mark. Disulfide bonds link C23–C26 and C79–C83.

It belongs to the glutaredoxin family.

The protein localises to the cytoplasm. In terms of biological role, has a glutathione-disulfide oxidoreductase activity in the presence of NADPH and glutathione reductase. Reduces low molecular weight disulfides and proteins. This is Glutaredoxin-1 (GLRX) from Homo sapiens (Human).